The sequence spans 56 residues: Large ribosomal subunit protein bL32 (56 aa).

Over residues 1-20 (MAVPKRRTSRSNTRSRRAQW) the composition is skewed to basic residues. The disordered stretch occupies residues 1–26 (MAVPKRRTSRSNTRSRRAQWKAKAPA).

It belongs to the bacterial ribosomal protein bL32 family.

The polypeptide is Large ribosomal subunit protein bL32 (Parafrankia sp. (strain EAN1pec)).